The chain runs to 234 residues: 2-C-methyl-D-erythritol 4-phosphate cytidylyltransferase (234 aa).

It belongs to the IspD/TarI cytidylyltransferase family. IspD subfamily.

The enzyme catalyses 2-C-methyl-D-erythritol 4-phosphate + CTP + H(+) = 4-CDP-2-C-methyl-D-erythritol + diphosphate. The protein operates within isoprenoid biosynthesis; isopentenyl diphosphate biosynthesis via DXP pathway; isopentenyl diphosphate from 1-deoxy-D-xylulose 5-phosphate: step 2/6. Functionally, catalyzes the formation of 4-diphosphocytidyl-2-C-methyl-D-erythritol from CTP and 2-C-methyl-D-erythritol 4-phosphate (MEP). In Pseudomonas aeruginosa (strain UCBPP-PA14), this protein is 2-C-methyl-D-erythritol 4-phosphate cytidylyltransferase.